The primary structure comprises 365 residues: MSNLSTALNLVPSETQLPVSAYFDEALYQTEIERLFKHGPSYVGHELMVPEVGDYHTLAAEAEGRVLVRNPNGVELLSNVCRHRQAIMLNGRGNAQNIVCPLHRWTYDLKGELLGAPHFERQPCVHLSRSLLQNWNGLLFEGKRDVRNDLARLGVARDLDFSGYMLDHVEVHDCDYNWKTFIEVYLEDYHVVPFHPGLGQFVSCDDLTWEFGEWYSVQTVGIHAGLRKPGTATYQKWHDAVLRFNNGEMPKYGAVWLTYYPNVMVEWYPNVLVVSTLHPMGPGKTRNVVEFYYPEEIVLFEREFVEAERAAYMETCIEDDEIAERMDAGRLALLRRGTSEVGPYQSPMEDGMQHFHEWYRRVMDY.

The 98-residue stretch at 44–141 (GHELMVPEVG…LQNWNGLLFE (98 aa)) folds into the Rieske domain. Residues cysteine 81, histidine 83, cysteine 100, and histidine 103 each contribute to the [2Fe-2S] cluster site.

This sequence belongs to the bacterial ring-hydroxylating dioxygenase alpha subunit family. The cofactor is [2Fe-2S] cluster.

Its function is as follows. Rieske-type iron sulfur protein that can catalyze in vitro the 2-hydroxylation of putrescine, forming 2-hydroxyputrescine. May be involved in the biosynthesis of the cyclic hydroxamate siderophore alcaligin. The chain is Putrescine 2-hydroxylase from Ralstonia nicotianae (strain ATCC BAA-1114 / GMI1000) (Ralstonia solanacearum).